We begin with the raw amino-acid sequence, 204 residues long: MTKYTFKPKDFKAFNVEGLDARMEALNEYIRPQLHELGEYFSDFFTSQTGETFYPHVAKHARRSVNPPKDTWVAFATSKRGYKMLPHFQIGMFEDQLFVMFGIMHEAKDKATRAKVFERKFKAIQQLPDDYRVCLDHMKPDKPFIKDLTDDDLKEAIQRAINVKKGEFFIARAITPQDKRLKSDKAFIAFLEETFDQFLPFYSA.

It belongs to the UPF0637 family.

The chain is UPF0637 protein SaurJH9_1166 from Staphylococcus aureus (strain JH9).